The sequence spans 674 residues: tRNA 5-methylaminomethyl-2-thiouridine biosynthesis bifunctional protein MnmC (674 aa).

Residues 1–237 are tRNA (mnm(5)s(2)U34)-methyltransferase; the sequence is MLTSYQLESP…KREMTVGELN (237 aa). The tract at residues 270–674 is FAD-dependent cmnm(5)s(2)U34 oxidoreductase; the sequence is VGAGLAGANT…IRDLKRSQIL (405 aa).

It in the N-terminal section; belongs to the methyltransferase superfamily. tRNA (mnm(5)s(2)U34)-methyltransferase family. In the C-terminal section; belongs to the DAO family. It depends on FAD as a cofactor.

The protein resides in the cytoplasm. The enzyme catalyses 5-aminomethyl-2-thiouridine(34) in tRNA + S-adenosyl-L-methionine = 5-methylaminomethyl-2-thiouridine(34) in tRNA + S-adenosyl-L-homocysteine + H(+). In terms of biological role, catalyzes the last two steps in the biosynthesis of 5-methylaminomethyl-2-thiouridine (mnm(5)s(2)U) at the wobble position (U34) in tRNA. Catalyzes the FAD-dependent demodification of cmnm(5)s(2)U34 to nm(5)s(2)U34, followed by the transfer of a methyl group from S-adenosyl-L-methionine to nm(5)s(2)U34, to form mnm(5)s(2)U34. The protein is tRNA 5-methylaminomethyl-2-thiouridine biosynthesis bifunctional protein MnmC of Marinomonas sp. (strain MWYL1).